We begin with the raw amino-acid sequence, 525 residues long: Mannuronan C5-epimerase AlgG (525 aa).

The first 29 residues, 1–29, serve as a signal peptide directing secretion; it reads MNVQRKLASTQLKPVLLGVLLATSAWSQA. PbH1 repeat units lie at residues 287–309, 311–334, 336–358, 360–382, and 383–405; these read ADDV…DPHD, SERL…IVSR, VNNS…VLDR, SEHN…TLYE, and SSNN…RMRN. Histidine 308 acts as the Proton acceptor in catalysis.

It belongs to the D-mannuronate C5-epimerase family.

The protein localises to the periplasm. It carries out the reaction [(1-&gt;4)-beta-D-mannuronosyl](n) = [alginate](n). It functions in the pathway glycan biosynthesis; alginate biosynthesis. Inhibited by zinc. Functionally, catalyzes the epimerization of beta-D-mannuronate to alpha-L-guluronate during the synthesis of the linear polysaccharide alginate. In addition, is part of a periplasmic protein complex that protects alginate from degradation by AlgL by channeling the newly formed alginate polymer through a scaffold that transfers the alginate polymer through the periplasmic space to the outer membrane secretin AlgE. The sequence is that of Mannuronan C5-epimerase AlgG from Azotobacter vinelandii.